Reading from the N-terminus, the 130-residue chain is Protein ApaG (130 aa).

An ApaG domain is found at glutamate 3 to leucine 127.

This is Protein ApaG from Maricaulis maris (strain MCS10) (Caulobacter maris).